A 118-amino-acid polypeptide reads, in one-letter code: Fluoride-specific ion channel FluC 2 (118 aa).

4 helical membrane-spanning segments follow: residues 1–21 (MIEALLVATGGFFGAITRFAI), 33–53 (FPLATFLINITGAFLLGYIIG), 55–75 (GVTTGWQLLLGTGFMGAFTTF), and 91–111 (ISTFLLYLSATYIIGILFAFL). Positions 70 and 73 each coordinate Na(+).

This sequence belongs to the fluoride channel Fluc/FEX (TC 1.A.43) family.

Its subcellular location is the cell membrane. The catalysed reaction is fluoride(in) = fluoride(out). Its activity is regulated as follows. Na(+) is not transported, but it plays an essential structural role and its presence is essential for fluoride channel function. Its function is as follows. Fluoride-specific ion channel. Important for reducing fluoride concentration in the cell, thus reducing its toxicity. In Bacillus cereus (strain ATCC 14579 / DSM 31 / CCUG 7414 / JCM 2152 / NBRC 15305 / NCIMB 9373 / NCTC 2599 / NRRL B-3711), this protein is Fluoride-specific ion channel FluC 2.